Consider the following 295-residue polypeptide: HTH-type transcriptional regulator TfdS (295 aa).

The HTH lysR-type domain maps to 1–58; sequence MEFRQLRYFVAAAEEGNVGAAARRLHISQPPVTRQIHALEQHLGVLLFERSARGVQLT. Residues 18–37 constitute a DNA-binding region (H-T-H motif); it reads VGAAARRLHISQPPVTRQIH.

It belongs to the LysR transcriptional regulatory family.

It is found in the cytoplasm. Its function is as follows. Involved in the regulation of 3-chlorocatechol degradation. Transcriptional regulator of tfdB expression. Acts as a repressor in the absence of its effector (either 2-cis-chlorodiene lactone or chloromaleylacetate) but acts as an activator when its effector is present. This chain is HTH-type transcriptional regulator TfdS (tfdS), found in Cupriavidus pinatubonensis (strain JMP 134 / LMG 1197) (Cupriavidus necator (strain JMP 134)).